Here is a 270-residue protein sequence, read N- to C-terminus: L-fucose dehydrogenase (270 aa).

Arginine 19, isoleucine 21, aspartate 40, lysine 41, aspartate 62, valine 63, asparagine 89, tyrosine 154, lysine 158, isoleucine 187, threonine 189, and leucine 191 together coordinate NAD(+). Tyrosine 154 functions as the Proton acceptor in the catalytic mechanism.

It belongs to the short-chain dehydrogenases/reductases (SDR) family. Homotetramer. In terms of tissue distribution, detected in retina.

Its subcellular location is the cytoplasm. It catalyses the reaction L-fucose + NAD(+) = L-fucono-1,5-lactone + NADH + H(+). The enzyme catalyses D-arabinose + NAD(+) = D-arabinono-1,5-lactone + NADH + H(+). The catalysed reaction is L-galactose + NAD(+) = L-galactono-1,5-lactone + NADH + H(+). The protein operates within carbohydrate degradation; L-fucose degradation. Functionally, catalyzes the NAD(+)-dependent oxidation of L-fucose, yielding L-fucono-1,5-lactone, which rapidly converts spontaneously to L-fucone-1,4-lactone. Can also act on D-arabinose and L-galactose, with lower catalytic efficiency. Does not use NADPH. May be the initial enzyme of the putative L-fucose degradation pathway in mammals. This is L-fucose dehydrogenase (HSD17B14) from Bos taurus (Bovine).